Reading from the N-terminus, the 201-residue chain is Recombination protein RecR (201 aa).

The segment at 60–75 (CSVCGNVDSCDPCTIC) adopts a C4-type zinc-finger fold. Residues 83-178 (STLIVVETVG…RTTRLAHGVP (96 aa)) form the Toprim domain.

It belongs to the RecR family.

Functionally, may play a role in DNA repair. It seems to be involved in an RecBC-independent recombinational process of DNA repair. It may act with RecF and RecO. The chain is Recombination protein RecR from Methylocella silvestris (strain DSM 15510 / CIP 108128 / LMG 27833 / NCIMB 13906 / BL2).